A 503-amino-acid chain; its full sequence is AMP phosphorylase (503 aa).

AMP is bound by residues G168, 194–199, and T203; that span reads SRAITS. The active-site Proton donor is D256. Positions 264 and 288 each coordinate AMP.

The protein belongs to the thymidine/pyrimidine-nucleoside phosphorylase family. Type 2 subfamily.

It catalyses the reaction AMP + phosphate = alpha-D-ribose 1,5-bisphosphate + adenine. It carries out the reaction CMP + phosphate = cytosine + alpha-D-ribose 1,5-bisphosphate. The catalysed reaction is UMP + phosphate = alpha-D-ribose 1,5-bisphosphate + uracil. Its function is as follows. Catalyzes the conversion of AMP and phosphate to adenine and ribose 1,5-bisphosphate (R15P). Exhibits phosphorylase activity toward CMP and UMP in addition to AMP. Functions in an archaeal AMP degradation pathway, together with R15P isomerase and RubisCO. In Pyrococcus furiosus (strain ATCC 43587 / DSM 3638 / JCM 8422 / Vc1), this protein is AMP phosphorylase.